The primary structure comprises 430 residues: Trigger factor (430 aa).

The 86-residue stretch at 157 to 242 (GDLVALETWS…AVEVSEPVLP (86 aa)) folds into the PPIase FKBP-type domain.

Belongs to the FKBP-type PPIase family. Tig subfamily.

The protein localises to the cytoplasm. The catalysed reaction is [protein]-peptidylproline (omega=180) = [protein]-peptidylproline (omega=0). Functionally, involved in protein export. Acts as a chaperone by maintaining the newly synthesized protein in an open conformation. Functions as a peptidyl-prolyl cis-trans isomerase. This is Trigger factor from Xanthomonas oryzae pv. oryzae (strain PXO99A).